An 84-amino-acid chain; its full sequence is MDISRAEQRILHHLAQGGRIEIKREGKTIAEIRCFTRDGWVYPGVDLELFRKLKRKRAIRSSSGRPYRITERGLYLVRSELDNR.

It belongs to the UPF0386 family.

In Sinorhizobium fredii (strain NBRC 101917 / NGR234), this protein is UPF0386 protein NGR_c10980.